A 252-amino-acid chain; its full sequence is Protein lin-28 homolog B (252 aa).

Residues 1–30 form a disordered region; sequence MAEGGAARGTREEQGKLPEQEEEEEEDPQV. The segment covering 9 to 19 has biased composition (basic and acidic residues); that stretch reads GTREEQGKLPE. Positions 32–105 constitute a CSD domain; the sequence is LGSGHCKWFN…GFESLRVTGP (74 aa). 2 CCHC-type zinc fingers span residues 130-147 and 152-169; these read DRCY…ECNL and KKCH…NCPH. Positions 132, 135, 140, 145, 154, 157, 162, and 167 each coordinate Zn(2+). The disordered stretch occupies residues 172–252; the sequence is VPQHPTTSQG…KGPSVQKKKK (81 aa). Residues 213–222 show a composition bias toward basic and acidic residues; that stretch reads GRSELSERSS. Polar residues predominate over residues 225–238; it reads PQEASLSKISTSPE.

This sequence belongs to the lin-28 family.

The protein localises to the nucleus. It is found in the nucleolus. Suppressor of specific microRNA (miRNA) biogenesis. Binds target primary miRNA transcripts and sequester them in the nucleolus, away from the microprocessor complex, hence preventing their processing into mature miRNA. The specific interaction with target pri-miRNAs occurs via an 5'-GGAG-3' motif in the pre-miRNA terminal loop. The chain is Protein lin-28 homolog B (lin28b) from Xenopus laevis (African clawed frog).